Consider the following 139-residue polypeptide: Small ribosomal subunit protein bS6 (139 aa).

The interval 97–139 is disordered; sequence TEASPMAKAKDERDSRRSSEGERRSAPAEATEEVKETAEKAAE. The segment covering 104–139 has biased composition (basic and acidic residues); it reads KAKDERDSRRSSEGERRSAPAEATEEVKETAEKAAE.

Belongs to the bacterial ribosomal protein bS6 family.

Functionally, binds together with bS18 to 16S ribosomal RNA. The polypeptide is Small ribosomal subunit protein bS6 (Shewanella sediminis (strain HAW-EB3)).